A 377-amino-acid chain; its full sequence is Protein RecA (377 aa).

82–89 (GPESSGKT) lines the ATP pocket. The disordered stretch occupies residues 345–377 (EGSEVSANSMRPLASAARQASSRPNLSQVSANG). The span at 362–377 (RQASSRPNLSQVSANG) shows a compositional bias: polar residues.

This sequence belongs to the RecA family.

The protein localises to the cytoplasm. Its function is as follows. Can catalyze the hydrolysis of ATP in the presence of single-stranded DNA, the ATP-dependent uptake of single-stranded DNA by duplex DNA, and the ATP-dependent hybridization of homologous single-stranded DNAs. It interacts with LexA causing its activation and leading to its autocatalytic cleavage. This Prochlorococcus marinus (strain NATL2A) protein is Protein RecA.